Here is a 104-residue protein sequence, read N- to C-terminus: Large ribosomal subunit protein uL23 (104 aa).

The protein belongs to the universal ribosomal protein uL23 family. Part of the 50S ribosomal subunit. Contacts protein L29, and trigger factor when it is bound to the ribosome.

Functionally, one of the early assembly proteins it binds 23S rRNA. One of the proteins that surrounds the polypeptide exit tunnel on the outside of the ribosome. Forms the main docking site for trigger factor binding to the ribosome. The polypeptide is Large ribosomal subunit protein uL23 (Cupriavidus metallidurans (strain ATCC 43123 / DSM 2839 / NBRC 102507 / CH34) (Ralstonia metallidurans)).